The primary structure comprises 259 residues: Imidazole glycerol phosphate synthase subunit HisF (259 aa).

Active-site residues include Asp-11 and Asp-130.

This sequence belongs to the HisA/HisF family. As to quaternary structure, heterodimer of HisH and HisF.

The protein localises to the cytoplasm. It catalyses the reaction 5-[(5-phospho-1-deoxy-D-ribulos-1-ylimino)methylamino]-1-(5-phospho-beta-D-ribosyl)imidazole-4-carboxamide + L-glutamine = D-erythro-1-(imidazol-4-yl)glycerol 3-phosphate + 5-amino-1-(5-phospho-beta-D-ribosyl)imidazole-4-carboxamide + L-glutamate + H(+). Its pathway is amino-acid biosynthesis; L-histidine biosynthesis; L-histidine from 5-phospho-alpha-D-ribose 1-diphosphate: step 5/9. IGPS catalyzes the conversion of PRFAR and glutamine to IGP, AICAR and glutamate. The HisF subunit catalyzes the cyclization activity that produces IGP and AICAR from PRFAR using the ammonia provided by the HisH subunit. In Solidesulfovibrio magneticus (strain ATCC 700980 / DSM 13731 / RS-1) (Desulfovibrio magneticus), this protein is Imidazole glycerol phosphate synthase subunit HisF.